The primary structure comprises 420 residues: Zinc finger protein 362 (420 aa).

Disordered stretches follow at residues 1–28 (MSRSSPSGKGHSRMAEPRFNNPYFWPPP), 54–80 (RPPHLPPTSASSQQPLLVPPAPAESSQ), and 115–155 (VTGL…SQSR). Residues 121–154 (STRTPSVSTSESSAGAGTGTGTSTPSTPTTTSQS) show a composition bias toward low complexity. At threonine 162 the chain carries Phosphothreonine. The disordered stretch occupies residues 178 to 202 (TIQGHGLLGPPKSERGRKKIKAENP). Residue lysine 198 forms a Glycyl lysine isopeptide (Lys-Gly) (interchain with G-Cter in SUMO2) linkage. C2H2-type zinc fingers lie at residues 227–249 (YRCKVCPLTFFTKSEMQIHSKSH), 255–277 (HKCPHCSKSFANASYLAQHLRIH), 283–305 (YHCSYCDKSFRQLSHLQQHTRIH), 311–335 (YKCPHPGCEKAFTQLSNLQSHQRQH), 341–363 (YKCPNCYRAYSDSASLQIHLSAH), and 371–393 (YCCSMCGRAYTSETYLMKHMSKH). At serine 404 the chain carries Phosphoserine.

It belongs to the krueppel C2H2-type zinc-finger protein family.

The protein localises to the nucleus. Its function is as follows. May be involved in transcriptional regulation. In Homo sapiens (Human), this protein is Zinc finger protein 362 (ZNF362).